The chain runs to 421 residues: 4-hydroxy-3-methylbut-2-en-1-yl diphosphate synthase (flavodoxin) (421 aa).

[4Fe-4S] cluster is bound by residues Cys311, Cys314, Cys357, and Glu364.

Belongs to the IspG family. It depends on [4Fe-4S] cluster as a cofactor.

The enzyme catalyses (2E)-4-hydroxy-3-methylbut-2-enyl diphosphate + oxidized [flavodoxin] + H2O + 2 H(+) = 2-C-methyl-D-erythritol 2,4-cyclic diphosphate + reduced [flavodoxin]. Its pathway is isoprenoid biosynthesis; isopentenyl diphosphate biosynthesis via DXP pathway; isopentenyl diphosphate from 1-deoxy-D-xylulose 5-phosphate: step 5/6. Functionally, converts 2C-methyl-D-erythritol 2,4-cyclodiphosphate (ME-2,4cPP) into 1-hydroxy-2-methyl-2-(E)-butenyl 4-diphosphate. The sequence is that of 4-hydroxy-3-methylbut-2-en-1-yl diphosphate synthase (flavodoxin) from Xanthomonas axonopodis pv. citri (strain 306).